A 120-amino-acid chain; its full sequence is uncharacterized protein (120 aa).

The interval 90 to 120 is disordered; the sequence is SLASRGGHMTQSGQCHVSGSLLGRGHKSRGR.

This is an uncharacterized protein from Homo sapiens (Human).